Reading from the N-terminus, the 496-residue chain is Iroquois-class homeodomain protein irx-4 (496 aa).

The homeobox; TALE-type DNA-binding region spans 141 to 203; sequence GSTRRKNATR…NARRRLKKEN (63 aa). The segment at 203-236 is disordered; the sequence is NKMTWPPRNKCSDEKRPYDEEEEEEEEEDSQKAT. Residues 221 to 231 are compositionally biased toward acidic residues; it reads DEEEEEEEEED.

Belongs to the TALE/IRO homeobox family. In terms of tissue distribution, expressed in the neural plate in overlapping patterns with other irx members, which all share an anterior border of expression. Broadly expressed in the tailbud rhombencephalon (hindbrain). Outside the nervous system and at tailbud stages, expressed in the developing otic vesicle, branchial arches and prospective heart region.

The protein localises to the nucleus. Functionally, acts partially redundantly with other irx members in neural patterning. Required for formation of the posterior forebrain, midbrain, hindbrain, and to a lesser extent, spinal cord. Patterns the neuroectoderm in both the anterior/posterior and dorsal/ventral axes. Does not appear to play a role in pronephros kidney development. This Xenopus tropicalis (Western clawed frog) protein is Iroquois-class homeodomain protein irx-4.